A 338-amino-acid polypeptide reads, in one-letter code: UDP-N-acetylenolpyruvoylglucosamine reductase (338 aa).

In terms of domain architecture, FAD-binding PCMH-type spans 17-188 (IAARTDWWID…MYVDYRLRLR (172 aa)). The active site involves Arg164. The active-site Proton donor is the Ser237. Glu333 is an active-site residue.

This sequence belongs to the MurB family. It depends on FAD as a cofactor.

It is found in the cytoplasm. It carries out the reaction UDP-N-acetyl-alpha-D-muramate + NADP(+) = UDP-N-acetyl-3-O-(1-carboxyvinyl)-alpha-D-glucosamine + NADPH + H(+). The protein operates within cell wall biogenesis; peptidoglycan biosynthesis. In terms of biological role, cell wall formation. The protein is UDP-N-acetylenolpyruvoylglucosamine reductase of Porphyromonas gingivalis (strain ATCC 33277 / DSM 20709 / CIP 103683 / JCM 12257 / NCTC 11834 / 2561).